Reading from the N-terminus, the 638-residue chain is Chaperone protein DnaK (638 aa).

Thr-199 bears the Phosphothreonine; by autocatalysis mark. The segment covering 603 to 618 (YAQPGAEAGAEQQGSA) has biased composition (low complexity). Residues 603 to 638 (YAQPGAEAGAEQQGSANNADDDIVDAEFEEVNDDKK) form a disordered region. Acidic residues predominate over residues 621-638 (ADDDIVDAEFEEVNDDKK).

The protein belongs to the heat shock protein 70 family.

Functionally, acts as a chaperone. The sequence is that of Chaperone protein DnaK from Hydrogenovibrio crunogenus (strain DSM 25203 / XCL-2) (Thiomicrospira crunogena).